The primary structure comprises 394 residues: NADH dehydrogenase [ubiquinone] iron-sulfur protein 2 (394 aa).

Polar residues predominate over residues 1 to 16 (MTTKNRQIKNFTSNFG). Residues 1 to 22 (MTTKNRQIKNFTSNFGPQHPAA) form a disordered region.

This sequence belongs to the complex I 49 kDa subunit family. As to quaternary structure, complex I is composed of about 45 different subunits. This is a component of the iron-sulfur (IP) fragment of the enzyme.

Its subcellular location is the mitochondrion. The enzyme catalyses a ubiquinone + NADH + 5 H(+)(in) = a ubiquinol + NAD(+) + 4 H(+)(out). In terms of biological role, core subunit of the mitochondrial membrane respiratory chain NADH dehydrogenase (Complex I) that is believed to belong to the minimal assembly required for catalysis. Complex I functions in the transfer of electrons from NADH to the respiratory chain. The immediate electron acceptor for the enzyme is believed to be ubiquinone. Component of the iron-sulfur (IP) fragment of the enzyme. This Nicotiana sylvestris (Wood tobacco) protein is NADH dehydrogenase [ubiquinone] iron-sulfur protein 2 (NAD7).